We begin with the raw amino-acid sequence, 320 residues long: Serpentine receptor class gamma-15 (320 aa).

Transmembrane regions (helical) follow at residues 29–49 (TISYLIPGGILHLFILHTILV), 57–77 (GSSFFAIFALDSVSSIIIVFI), 85–105 (FLYVPPLCPIVGPFFWASSLI), 151–171 (VSLVIICILPLGGTWNIIISP), 197–217 (LFQSIYILTALVFTFICTSVT), 240–260 (IYISLTFLAAAASQALYAFCT), and 268–288 (LFTAQFLAFDMFTVGSAVILF).

Belongs to the nematode receptor-like protein srg family.

Its subcellular location is the membrane. The polypeptide is Serpentine receptor class gamma-15 (srg-15) (Caenorhabditis elegans).